Reading from the N-terminus, the 277-residue chain is Thiazole synthase (277 aa).

Residue Lys118 is the Schiff-base intermediate with DXP of the active site. 1-deoxy-D-xylulose 5-phosphate is bound by residues Gly179, Ala205–Gly206, and Asn227–Thr228.

This sequence belongs to the ThiG family. Homotetramer. Forms heterodimers with either ThiH or ThiS.

It is found in the plastid. Its subcellular location is the chloroplast. It carries out the reaction [ThiS sulfur-carrier protein]-C-terminal-Gly-aminoethanethioate + 2-iminoacetate + 1-deoxy-D-xylulose 5-phosphate = [ThiS sulfur-carrier protein]-C-terminal Gly-Gly + 2-[(2R,5Z)-2-carboxy-4-methylthiazol-5(2H)-ylidene]ethyl phosphate + 2 H2O + H(+). It functions in the pathway cofactor biosynthesis; thiamine diphosphate biosynthesis. Catalyzes the rearrangement of 1-deoxy-D-xylulose 5-phosphate (DXP) to produce the thiazole phosphate moiety of thiamine. Sulfur is provided by the thiocarboxylate moiety of the carrier protein ThiS. In vitro, sulfur can be provided by H(2)S. The polypeptide is Thiazole synthase (Emiliania huxleyi (Coccolithophore)).